A 195-amino-acid polypeptide reads, in one-letter code: Rho-related protein racB (195 aa).

Glycine 10 to threonine 17 provides a ligand contact to GTP. The Effector region motif lies at tyrosine 32–tyrosine 40. Residues aspartate 57–glutamine 61 and threonine 115–aspartate 118 each bind GTP. At cysteine 192 the chain carries Cysteine methyl ester. Residue cysteine 192 is the site of S-geranylgeranyl cysteine attachment. Positions serine 193 to leucine 195 are cleaved as a propeptide — removed in mature form.

The protein belongs to the small GTPase superfamily. Rho family. As to quaternary structure, interacts with pakB.

The protein localises to the cell membrane. The sequence is that of Rho-related protein racB (racB) from Dictyostelium discoideum (Social amoeba).